A 365-amino-acid polypeptide reads, in one-letter code: Phosphoserine aminotransferase (365 aa).

Residue arginine 40 participates in L-glutamate binding. Pyridoxal 5'-phosphate is bound by residues 74-75, phenylalanine 99, threonine 155, aspartate 177, and glutamine 200; that span reads AS. N6-(pyridoxal phosphate)lysine is present on lysine 201. 241-242 provides a ligand contact to pyridoxal 5'-phosphate; that stretch reads NT.

It belongs to the class-V pyridoxal-phosphate-dependent aminotransferase family. SerC subfamily. As to quaternary structure, homodimer. Pyridoxal 5'-phosphate is required as a cofactor.

It is found in the cytoplasm. The catalysed reaction is O-phospho-L-serine + 2-oxoglutarate = 3-phosphooxypyruvate + L-glutamate. It carries out the reaction 4-(phosphooxy)-L-threonine + 2-oxoglutarate = (R)-3-hydroxy-2-oxo-4-phosphooxybutanoate + L-glutamate. It participates in amino-acid biosynthesis; L-serine biosynthesis; L-serine from 3-phospho-D-glycerate: step 2/3. In terms of biological role, catalyzes the reversible conversion of 3-phosphohydroxypyruvate to phosphoserine and of 3-hydroxy-2-oxo-4-phosphonooxybutanoate to phosphohydroxythreonine. This chain is Phosphoserine aminotransferase, found in Lactococcus lactis subsp. cremoris (strain MG1363).